We begin with the raw amino-acid sequence, 886 residues long: Kinesin-like protein KIF18A (886 aa).

The region spanning 11–355 (RMKVVVRVRP…LKYANRAKEI (345 aa)) is the Kinesin motor domain. Residue K24 forms a Glycyl lysine isopeptide (Lys-Gly) (interchain with G-Cter in SUMO2) linkage. 113-120 (GATGSGKT) is a binding site for ATP. A coiled-coil region spans residues 370 to 404 (ISQYVKICNMQKAEILMLKEKLKAYEEQKALSDRN). The residue at position 674 (S674) is a Phosphoserine. A Glycyl lysine isopeptide (Lys-Gly) (interchain with G-Cter in SUMO2) cross-link involves residue K683. The residue at position 695 (S695) is a Phosphoserine. Residues 774–804 (EQEPLASSKSSVHRIESSSFSTKDSMPESAG) form a disordered region. K782 is covalently cross-linked (Glycyl lysine isopeptide (Lys-Gly) (interchain with G-Cter in SUMO2)). Residue S826 is modified to Phosphoserine. A Glycyl lysine isopeptide (Lys-Gly) (interchain with G-Cter in SUMO2) cross-link involves residue K862. A disordered region spans residues 862–886 (KRNTNKTNSNMLRKFRRNTSKENVQ).

The protein belongs to the TRAFAC class myosin-kinesin ATPase superfamily. Kinesin family. As to quaternary structure, interacts with CENPE and ESR1. Glycosylated. In terms of processing, ubiquitinated.

Its subcellular location is the cell projection. It is found in the ruffle. The protein resides in the cytoplasm. The protein localises to the nucleus. It localises to the cytoskeleton. Its subcellular location is the microtubule organizing center. It is found in the centrosome. Its function is as follows. Microtubule-depolymerizing kinesin which plays a role in chromosome congression by reducing the amplitude of preanaphase oscillations and slowing poleward movement during anaphase, thus suppressing chromosome movements. May stabilize the CENPE-BUB1B complex at the kinetochores during early mitosis and maintains CENPE levels at kinetochores during chromosome congression. This chain is Kinesin-like protein KIF18A (Kif18a), found in Mus musculus (Mouse).